The following is a 160-amino-acid chain: Protein cornichon homolog 2 (160 aa).

The Cytoplasmic portion of the chain corresponds to 1 to 10 (MAFTFAAFCY). The chain crosses the membrane as a helical span at residues 11–31 (MLTLVLCASLIFFVIWHIIAF). The Lumenal portion of the chain corresponds to 32-72 (DELRTDFKNPIDQGNPARARERLKNIERICCLLRKLVVPEY). Residues 73-93 (CIHGLFCLMFLCAAEWVTLGL) form a helical membrane-spanning segment. At 94-138 (NLPLLLYHLWRYFHRPSDGSEGLFDAVSIMDADILGYCQKEAWCK) the chain is on the cytoplasmic side. Residues 139 to 159 (LAFYLLSFFYYLYSMVYTLVS) traverse the membrane as a helical segment. Phenylalanine 160 is a topological domain (lumenal).

Belongs to the cornichon family. As to quaternary structure, interacts with HBEGF. As to expression, expressed in the odd-numbered neuromeres (r3 and r5) of the developing hindbrain.

It is found in the membrane. In terms of biological role, regulates the trafficking and gating properties of AMPA-selective glutamate receptors (AMPARs). Plays an important role in the proper development of cranial nerves by facilitating the secretion of HBEGF. The sequence is that of Protein cornichon homolog 2 (CNIH2) from Gallus gallus (Chicken).